Reading from the N-terminus, the 142-residue chain is DNA-directed RNA polymerase II subunit RPB4 (142 aa).

Belongs to the eukaryotic RPB4 RNA polymerase subunit family. As to quaternary structure, component of the RNA polymerase II (Pol II) core complex consisting of 12 subunits: a ten-subunit catalytic core composed of POLR2A/RPB1, POLR2B/RPB2, POLR2C/RPB3, POLR2I/RPB9, POLR2J/RPB11, POLR2E/RPABC1, POLR2F/RPABC2, POLR2H/RPABC3, POLR2K/RPABC4 and POLR2L/RPABC5 and a mobile stalk composed of two subunits POLR2D/RPB4 and POLR2G/RPB7, protruding from the core and functioning primarily in transcription initiation. Part of Pol II(G) complex, in which Pol II core associates with an additional subunit POLR2M; unlike conventional Pol II, Pol II(G) functions as a transcriptional repressor. Part of Pol II pre-initiation complex (PIC), in which Pol II core assembles with Mediator, general transcription factors and other specific initiation factors including GTF2E1, GTF2E2, GTF2F1, GTF2F2, TCEA1, ERCC2, ERCC3, GTF2H2, GTF2H3, GTF2H4, GTF2H5, GTF2A1, GTF2A2, GTF2B and TBP; this large multi-subunit PIC complex mediates DNA unwinding and targets Pol II core to the transcription start site where the first phosphodiester bond forms.

It localises to the nucleus. Functionally, core component of RNA polymerase II (Pol II), a DNA-dependent RNA polymerase which synthesizes mRNA precursors and many functional non-coding RNAs using the four ribonucleoside triphosphates as substrates. Pol II is the central component of the basal RNA polymerase II transcription machinery. It is composed of mobile elements that move relative to each other. POLR2D/RPB4 is part of a subcomplex with POLR2G/RPB7 that binds to a pocket formed by POLR2A/RPB1, POLR2B/RPB2 and POLR2F/RPABC2 at the base of the clamp element. The POLR2D/RPB4-POLR2G/RPB7 subcomplex seems to lock the clamp via POLR2G/RPB7 in the closed conformation thus preventing double-stranded DNA to enter the active site cleft. The POLR2D/RPB4-POLR2G/RPB7 subcomplex binds single-stranded DNA and RNA. The polypeptide is DNA-directed RNA polymerase II subunit RPB4 (POLR2D) (Bos taurus (Bovine)).